The primary structure comprises 2849 residues: Immunoglobulin-like and fibronectin type III domain-containing protein 1 (2849 aa).

The interval Ala82–Leu108 is disordered. Positions Gly90 to Ser101 are enriched in low complexity. Positions Pro187–Thr277 constitute an Ig-like 1 domain. Positions Ile347–His380 form a coiled coil. One can recognise an Ig-like 2 domain in the interval Pro468–Gly557. Disordered regions lie at residues Leu577–Leu600, Val652–Arg760, Tyr864–Ser924, Val962–Gln981, Glu1061–Ala1103, Thr1221–Gly1258, Ser1312–His1338, Arg1350–Glu1384, Glu1498–Glu1523, Glu1654–Ile1675, Gln1724–His1780, and Gly1827–His2055. Residues His717–Arg742 are compositionally biased toward basic and acidic residues. Over residues Gly866–Ser880 the composition is skewed to polar residues. Positions Arg1070–Gly1084 are enriched in gly residues. Residues Ser1873 to Leu1882 are compositionally biased toward polar residues. 2 stretches are compositionally biased toward basic and acidic residues: residues Ser1988–Gln2004 and Ser2012–Ser2021. The Ig-like 3 domain maps to Pro2034 to Thr2137. 3 Fibronectin type-III domains span residues Pro2244–Glu2339, Pro2344–Pro2443, and Pro2445–Ala2540. The Ig-like 4 domain occupies Pro2544–Thr2628. The 95-residue stretch at Ala2641–Gln2735 folds into the Fibronectin type-III 4 domain. Positions Pro2749–Thr2845 constitute an Ig-like 5 domain.

As to quaternary structure, interacts with FLNC. Interacts with KY. In terms of tissue distribution, isoform 1, isoform 3 and isoform 4 are expressed in skeletal muscle while isoform 2 is detected in both skeletal muscle and heart (at protein level).

The protein localises to the nucleus. It localises to the cytoplasm. It is found in the myofibril. Its subcellular location is the sarcomere. The protein resides in the z line. This chain is Immunoglobulin-like and fibronectin type III domain-containing protein 1 (Igfn1), found in Mus musculus (Mouse).